Here is a 210-residue protein sequence, read N- to C-terminus: Proteasome subunit beta (210 aa).

Positions 1-9 (MDNDKYLKG) are cleaved as a propeptide — removed in mature form; by autocatalysis. Threonine 10 acts as the Nucleophile in catalysis.

Belongs to the peptidase T1B family. In terms of assembly, the 20S proteasome core is composed of 14 alpha and 14 beta subunits that assemble into four stacked heptameric rings, resulting in a barrel-shaped structure. The two inner rings, each composed of seven catalytic beta subunits, are sandwiched by two outer rings, each composed of seven alpha subunits. The catalytic chamber with the active sites is on the inside of the barrel. Has a gated structure, the ends of the cylinder being occluded by the N-termini of the alpha-subunits. Is capped at one or both ends by the proteasome regulatory ATPase, PAN.

The protein resides in the cytoplasm. The catalysed reaction is Cleavage of peptide bonds with very broad specificity.. With respect to regulation, the formation of the proteasomal ATPase PAN-20S proteasome complex, via the docking of the C-termini of PAN into the intersubunit pockets in the alpha-rings, triggers opening of the gate for substrate entry. Interconversion between the open-gate and close-gate conformations leads to a dynamic regulation of the 20S proteasome proteolysis activity. Its function is as follows. Component of the proteasome core, a large protease complex with broad specificity involved in protein degradation. This is Proteasome subunit beta from Methanosarcina thermophila.